The primary structure comprises 133 residues: Small ribosomal subunit protein bS6 (133 aa).

Belongs to the bacterial ribosomal protein bS6 family.

Its function is as follows. Binds together with bS18 to 16S ribosomal RNA. This is Small ribosomal subunit protein bS6 from Chlorobium phaeovibrioides (strain DSM 265 / 1930) (Prosthecochloris vibrioformis (strain DSM 265)).